The following is a 135-amino-acid chain: NADPH-dependent 7-cyano-7-deazaguanine reductase (135 aa).

C48 (thioimide intermediate) is an active-site residue. Residue D55 is the Proton donor of the active site. Residues 70 to 72 (IEL) and 89 to 90 (HE) each bind substrate.

Belongs to the GTP cyclohydrolase I family. QueF type 1 subfamily.

The protein localises to the cytoplasm. It catalyses the reaction 7-aminomethyl-7-carbaguanine + 2 NADP(+) = 7-cyano-7-deazaguanine + 2 NADPH + 3 H(+). The protein operates within tRNA modification; tRNA-queuosine biosynthesis. Functionally, catalyzes the NADPH-dependent reduction of 7-cyano-7-deazaguanine (preQ0) to 7-aminomethyl-7-deazaguanine (preQ1). This chain is NADPH-dependent 7-cyano-7-deazaguanine reductase, found in Prochlorococcus marinus (strain MIT 9313).